We begin with the raw amino-acid sequence, 214 residues long: Ribosomal RNA small subunit methyltransferase G (214 aa).

S-adenosyl-L-methionine is bound by residues glycine 58, 109–110 (AE), and arginine 126.

It belongs to the methyltransferase superfamily. RNA methyltransferase RsmG family.

It localises to the cytoplasm. Its function is as follows. Specifically methylates the N7 position of a guanine in 16S rRNA. In Ureaplasma parvum serovar 3 (strain ATCC 700970), this protein is Ribosomal RNA small subunit methyltransferase G.